Consider the following 106-residue polypeptide: Met repressor (106 aa).

The protein belongs to the MetJ family. Homodimer.

The protein resides in the cytoplasm. In terms of biological role, this regulatory protein, when combined with SAM (S-adenosylmethionine) represses the expression of the methionine regulon and of enzymes involved in SAM synthesis. This Vibrio atlanticus (strain LGP32) (Vibrio splendidus (strain Mel32)) protein is Met repressor.